The chain runs to 255 residues: Hydroxyacylglutathione hydrolase (255 aa).

Zn(2+) contacts are provided by His56, His58, Asp60, His61, His114, Asp133, and His171.

This sequence belongs to the metallo-beta-lactamase superfamily. Glyoxalase II family. Monomer. Zn(2+) serves as cofactor.

It catalyses the reaction an S-(2-hydroxyacyl)glutathione + H2O = a 2-hydroxy carboxylate + glutathione + H(+). Its pathway is secondary metabolite metabolism; methylglyoxal degradation; (R)-lactate from methylglyoxal: step 2/2. Its function is as follows. Thiolesterase that catalyzes the hydrolysis of S-D-lactoyl-glutathione to form glutathione and D-lactic acid. The chain is Hydroxyacylglutathione hydrolase from Rhodopseudomonas palustris (strain BisA53).